A 553-amino-acid chain; its full sequence is Putative transport protein AHA_3492 (553 aa).

5 helical membrane passes run 4-24 (IALS…LGNW), 29-49 (VGLG…FAGL), 65-85 (FGLI…FFSS), 95-115 (GFAA…HQLF), and 158-178 (MGYA…MWLI). RCK C-terminal domains are found at residues 191–276 (AQFE…VLGE) and 279–361 (ETSL…VVGN). 6 helical membrane passes run 371 to 391 (MLPV…PFYL), 403 to 425 (AGGP…LYWF), 439 to 459 (IVLF…DTLI), 465 to 485 (AWMM…GVLA), 493 to 513 (YLTL…LAFA), and 533 to 553 (LVMF…WAGA).

This sequence belongs to the AAE transporter (TC 2.A.81) family. YidE subfamily.

The protein localises to the cell membrane. This is Putative transport protein AHA_3492 from Aeromonas hydrophila subsp. hydrophila (strain ATCC 7966 / DSM 30187 / BCRC 13018 / CCUG 14551 / JCM 1027 / KCTC 2358 / NCIMB 9240 / NCTC 8049).